We begin with the raw amino-acid sequence, 526 residues long: Cytochrome P450 monooxygenase 253 (526 aa).

Helical transmembrane passes span 13–33 (IASSTIGQRILLALALGLLLI), 115–135 (FIMAGEILTGGMLIVFTGYGK), and 306–326 (IGAGAETTAASLSVFMLAMTL). Heme is bound at residue C451.

The protein belongs to the cytochrome P450 family. It depends on heme as a cofactor.

It is found in the membrane. The protein operates within secondary metabolite biosynthesis. Functionally, cytochrome P450 monooxygenase that is able to use delta(6)-protoilludene as a substrate to produce delta(6)-protoilludene-8-ol. The sequence is that of Cytochrome P450 monooxygenase 253 from Postia placenta (strain ATCC 44394 / Madison 698-R) (Brown rot fungus).